Consider the following 108-residue polypeptide: Phosphocarrier protein HPr (108 aa).

An HPr domain is found at 21–108 (ELQATCIVKN…DAFSSGFGEL (88 aa)). H35 acts as the Pros-phosphohistidine intermediate in catalysis.

The protein belongs to the HPr family.

Its subcellular location is the cytoplasm. General (non sugar-specific) component of the phosphoenolpyruvate-dependent sugar phosphotransferase system (sugar PTS). This major carbohydrate active-transport system catalyzes the phosphorylation of incoming sugar substrates concomitantly with their translocation across the cell membrane. The phosphoryl group from phosphoenolpyruvate (PEP) is transferred to the phosphoryl carrier protein HPr by enzyme I. Phospho-HPr then transfers it to the PTS EIIA domain. This Chlamydia pneumoniae (Chlamydophila pneumoniae) protein is Phosphocarrier protein HPr (ptsH).